Here is an 871-residue protein sequence, read N- to C-terminus: DNA mismatch repair protein MutS (871 aa).

625 to 632 (GPNMAGKS) is an ATP binding site.

The protein belongs to the DNA mismatch repair MutS family.

Its function is as follows. This protein is involved in the repair of mismatches in DNA. It is possible that it carries out the mismatch recognition step. This protein has a weak ATPase activity. The chain is DNA mismatch repair protein MutS from Chlorobium limicola (strain DSM 245 / NBRC 103803 / 6330).